Consider the following 526-residue polypeptide: MTAVCLHPGRLTLAELRTIAFSDSRLELEPACFPVVARGAATVAAIARSGEPAYGINTGFGRLAQTHIPDDQLELLQKNLVLSHAVGVGEPLSAPTVRLVLALKIASLARGHSGVRMELINALLGLFNAGVIPRVPSKGSVGASGDLAPLAHLSALLLGIGEAYVDGRHVPATEALAIAGLAPMTLAAKEGLALLNGTQVSTALALVNLFAIETVFRTALVAGALSVDAAAGSFKPFDARIHALRGQPGQIDAAATYRQLLEGSGINLAHRDCGKVQDPYSLRCQPQVMGACLDQMRHAARVLLIEANAVSDNPLVFPDSGEVLSGGNFHGEPVAFAADALALAAAEIGALAERRIALLIDATLSGLPPFLVTEGGVNSGFMIAHVTAAALASENKLLAHPASVDSLPTSANQEDHVSMSTFAARKLGELADNTATILAIELLAAAQGVELRAPHRTSPRLQAVLALIRSRVPHYDIDRYFAPDIASIKDEVSAGAFARHCPLSFDSERVADGEASRSATPDDESL.

Positions 143–145 (ASG) form a cross-link, 5-imidazolinone (Ala-Gly). The residue at position 144 (Ser144) is a 2,3-didehydroalanine (Ser).

This sequence belongs to the PAL/histidase family. Post-translationally, contains an active site 4-methylidene-imidazol-5-one (MIO), which is formed autocatalytically by cyclization and dehydration of residues Ala-Ser-Gly.

It is found in the cytoplasm. The catalysed reaction is L-histidine = trans-urocanate + NH4(+). The protein operates within amino-acid degradation; L-histidine degradation into L-glutamate; N-formimidoyl-L-glutamate from L-histidine: step 1/3. The protein is Histidine ammonia-lyase of Aromatoleum aromaticum (strain DSM 19018 / LMG 30748 / EbN1) (Azoarcus sp. (strain EbN1)).